Reading from the N-terminus, the 358-residue chain is Glycerol-3-phosphate dehydrogenase [NAD(P)+] (358 aa).

Ser-33, Phe-34, Arg-54, and Lys-128 together coordinate NADPH. Lys-128 and Gly-156 together coordinate sn-glycerol 3-phosphate. Ala-160 is a binding site for NADPH. Sn-glycerol 3-phosphate contacts are provided by Lys-211, Asp-264, Ser-274, Arg-275, and Asn-276. The active-site Proton acceptor is the Lys-211. Arg-275 serves as a coordination point for NADPH. NADPH contacts are provided by Val-299 and Glu-301.

Belongs to the NAD-dependent glycerol-3-phosphate dehydrogenase family.

The protein localises to the cytoplasm. It carries out the reaction sn-glycerol 3-phosphate + NAD(+) = dihydroxyacetone phosphate + NADH + H(+). The catalysed reaction is sn-glycerol 3-phosphate + NADP(+) = dihydroxyacetone phosphate + NADPH + H(+). It participates in membrane lipid metabolism; glycerophospholipid metabolism. Functionally, catalyzes the reduction of the glycolytic intermediate dihydroxyacetone phosphate (DHAP) to sn-glycerol 3-phosphate (G3P), the key precursor for phospholipid synthesis. This Saccharophagus degradans (strain 2-40 / ATCC 43961 / DSM 17024) protein is Glycerol-3-phosphate dehydrogenase [NAD(P)+].